Here is a 143-residue protein sequence, read N- to C-terminus: Hemoglobin subunit alpha (143 aa).

Serine 2 is modified (N-acetylserine). One can recognise a Globin domain in the interval 2 to 143; that stretch reads SLSDTDKAVV…LALALSEKYR (142 aa). Histidine 60 is an O2 binding site. Histidine 89 serves as a coordination point for heme b.

Belongs to the globin family. As to quaternary structure, heterotetramer of two alpha chains and two beta chains. Red blood cells.

Its function is as follows. Involved in oxygen transport from gills to the various peripheral tissues. The chain is Hemoglobin subunit alpha (hbaa1) from Danio rerio (Zebrafish).